A 352-amino-acid polypeptide reads, in one-letter code: Uroporphyrinogen decarboxylase (352 aa).

Substrate contacts are provided by residues 27–31 (RQAGR), aspartate 77, tyrosine 154, threonine 209, and histidine 325.

The protein belongs to the uroporphyrinogen decarboxylase family. In terms of assembly, homodimer.

The protein localises to the cytoplasm. The catalysed reaction is uroporphyrinogen III + 4 H(+) = coproporphyrinogen III + 4 CO2. The protein operates within porphyrin-containing compound metabolism; protoporphyrin-IX biosynthesis; coproporphyrinogen-III from 5-aminolevulinate: step 4/4. In terms of biological role, catalyzes the decarboxylation of four acetate groups of uroporphyrinogen-III to yield coproporphyrinogen-III. The protein is Uroporphyrinogen decarboxylase of Legionella pneumophila subsp. pneumophila (strain Philadelphia 1 / ATCC 33152 / DSM 7513).